The following is a 381-amino-acid chain: Chorismate synthase (381 aa).

NADP(+) contacts are provided by Arg-39 and Arg-45. Residues 127-129 (RAS), 248-249 (QS), Gly-293, 308-312 (KPIPT), and Arg-334 each bind FMN.

It belongs to the chorismate synthase family. In terms of assembly, homotetramer. The cofactor is FMNH2.

The catalysed reaction is 5-O-(1-carboxyvinyl)-3-phosphoshikimate = chorismate + phosphate. Its pathway is metabolic intermediate biosynthesis; chorismate biosynthesis; chorismate from D-erythrose 4-phosphate and phosphoenolpyruvate: step 7/7. Catalyzes the anti-1,4-elimination of the C-3 phosphate and the C-6 proR hydrogen from 5-enolpyruvylshikimate-3-phosphate (EPSP) to yield chorismate, which is the branch point compound that serves as the starting substrate for the three terminal pathways of aromatic amino acid biosynthesis. This reaction introduces a second double bond into the aromatic ring system. This Caldicellulosiruptor saccharolyticus (strain ATCC 43494 / DSM 8903 / Tp8T 6331) protein is Chorismate synthase.